A 452-amino-acid polypeptide reads, in one-letter code: Phosphatidylinositol N-acetylglucosaminyltransferase GPI3 subunit (452 aa).

A helical membrane pass occupies residues 407-427 (LYLLCGIVEYMLFFLLEWLYP).

Belongs to the glycosyltransferase group 1 family. As to quaternary structure, component of the phosphatidylinositol N-acetylglucosaminyltransferase complex composed of at least GPI1, GPI2, GPI3, GPI15, GPI19 and ERI1.

The protein resides in the endoplasmic reticulum membrane. The enzyme catalyses a 1,2-diacyl-sn-glycero-3-phospho-(1D-myo-inositol) + UDP-N-acetyl-alpha-D-glucosamine = a 6-(N-acetyl-alpha-D-glucosaminyl)-1-(1,2-diacyl-sn-glycero-3-phospho)-1D-myo-inositol + UDP + H(+). The protein operates within glycolipid biosynthesis; glycosylphosphatidylinositol-anchor biosynthesis. With respect to regulation, inhibited by Ras, probably via the interaction between RAS2 and ERI1. Its function is as follows. Catalytic subunit in the complex catalyzing the transfer of N-acetylglucosamine from UDP-N-acetylglucosamine to phosphatidylinositol, the first step of GPI biosynthesis. The protein is Phosphatidylinositol N-acetylglucosaminyltransferase GPI3 subunit (SPT14) of Saccharomyces cerevisiae (strain RM11-1a) (Baker's yeast).